Reading from the N-terminus, the 167-residue chain is uncharacterized protein (167 aa).

The protein resides in the mitochondrion. This is an uncharacterized protein from Marchantia polymorpha (Common liverwort).